Reading from the N-terminus, the 67-residue chain is Protein C' (67 aa).

Belongs to the rhabdoviruses C protein family.

In terms of biological role, seems to stimulates transcription by the viral polymerase. May play a role in viral pathogenesis or transmission by insects vectors. The protein is Protein C' (P) of Aedes (Bovine).